Here is a 341-residue protein sequence, read N- to C-terminus: Thiamine-phosphate synthase (341 aa).

Residues 1–123 are unknown; it reads MAVVEEQVVL…AAAAKEWRYR (123 aa). Residues 61–80 form a disordered region; the sequence is AARDTPHDPGTGLEHPDEGV. Residues 124 to 341 form a thiamine-phosphate synthase region; sequence VYTLESTATG…AWFLERLNRG (218 aa). 4-amino-2-methyl-5-(diphosphooxymethyl)pyrimidine is bound by residues 171-175 and Asn203; that span reads QLREK. Mg(2+) contacts are provided by Asp204 and Asp223. Ser242 provides a ligand contact to 4-amino-2-methyl-5-(diphosphooxymethyl)pyrimidine. 268–270 is a 2-[(2R,5Z)-2-carboxy-4-methylthiazol-5(2H)-ylidene]ethyl phosphate binding site; the sequence is TPT. Lys271 contacts 4-amino-2-methyl-5-(diphosphooxymethyl)pyrimidine. Gly298 provides a ligand contact to 2-[(2R,5Z)-2-carboxy-4-methylthiazol-5(2H)-ylidene]ethyl phosphate.

Belongs to the thiamine-phosphate synthase family. It depends on Mg(2+) as a cofactor.

It carries out the reaction 2-[(2R,5Z)-2-carboxy-4-methylthiazol-5(2H)-ylidene]ethyl phosphate + 4-amino-2-methyl-5-(diphosphooxymethyl)pyrimidine + 2 H(+) = thiamine phosphate + CO2 + diphosphate. It catalyses the reaction 2-(2-carboxy-4-methylthiazol-5-yl)ethyl phosphate + 4-amino-2-methyl-5-(diphosphooxymethyl)pyrimidine + 2 H(+) = thiamine phosphate + CO2 + diphosphate. The enzyme catalyses 4-methyl-5-(2-phosphooxyethyl)-thiazole + 4-amino-2-methyl-5-(diphosphooxymethyl)pyrimidine + H(+) = thiamine phosphate + diphosphate. The protein operates within cofactor biosynthesis; thiamine diphosphate biosynthesis; thiamine phosphate from 4-amino-2-methyl-5-diphosphomethylpyrimidine and 4-methyl-5-(2-phosphoethyl)-thiazole: step 1/1. Its function is as follows. Condenses 4-methyl-5-(beta-hydroxyethyl)thiazole monophosphate (THZ-P) and 2-methyl-4-amino-5-hydroxymethyl pyrimidine pyrophosphate (HMP-PP) to form thiamine monophosphate (TMP). The sequence is that of Thiamine-phosphate synthase from Gloeobacter violaceus (strain ATCC 29082 / PCC 7421).